Consider the following 313-residue polypeptide: Ribosomal protein L11 methyltransferase (313 aa).

S-adenosyl-L-methionine contacts are provided by T164, G185, D207, and N249.

Belongs to the methyltransferase superfamily. PrmA family.

It localises to the cytoplasm. The catalysed reaction is L-lysyl-[protein] + 3 S-adenosyl-L-methionine = N(6),N(6),N(6)-trimethyl-L-lysyl-[protein] + 3 S-adenosyl-L-homocysteine + 3 H(+). Methylates ribosomal protein L11. In Clostridium perfringens (strain ATCC 13124 / DSM 756 / JCM 1290 / NCIMB 6125 / NCTC 8237 / Type A), this protein is Ribosomal protein L11 methyltransferase.